A 595-amino-acid polypeptide reads, in one-letter code: Beta-lactamase-like protein ARB_00930 (595 aa).

An N-terminal signal peptide occupies residues 1 to 18; that stretch reads MVVCFLWLLLPYAATTLS. N-linked (GlcNAc...) asparagine glycosylation is found at asparagine 70 and asparagine 102. The active-site Acyl-ester intermediate is serine 117. N-linked (GlcNAc...) asparagine glycans are attached at residues asparagine 147, asparagine 156, and asparagine 195. The active-site Proton acceptor is the tyrosine 235. N-linked (GlcNAc...) asparagine glycosylation is found at asparagine 249, asparagine 461, and asparagine 473.

This sequence belongs to the beta-lactamase family.

It is found in the secreted. The catalysed reaction is a beta-lactam + H2O = a substituted beta-amino acid. This Arthroderma benhamiae (strain ATCC MYA-4681 / CBS 112371) (Trichophyton mentagrophytes) protein is Beta-lactamase-like protein ARB_00930.